Reading from the N-terminus, the 321-residue chain is Mitochondrial coenzyme A transporter SLC25A42 (321 aa).

3 Solcar repeats span residues 33-119, 131-216, and 226-314; these read RSVL…YKGI, LPPV…LKKT, and PFPY…TQIL. Helical transmembrane passes span 35 to 55, 91 to 111, 137 to 154, 191 to 208, 232 to 252, and 295 to 315; these read VLNS…AVAP, LWRG…IQFC, LLAG…TYPL, GFTP…LSFF, LVFG…LDVV, and VKGP…QILL.

The protein belongs to the mitochondrial carrier (TC 2.A.29) family.

Its subcellular location is the mitochondrion inner membrane. It catalyses the reaction ADP(out) + CoA(in) = ADP(in) + CoA(out). The enzyme catalyses 3'-dephospho-CoA(in) + ADP(out) = 3'-dephospho-CoA(out) + ADP(in). It carries out the reaction adenosine 3',5'-bisphosphate(in) + ADP(out) = adenosine 3',5'-bisphosphate(out) + ADP(in). The catalysed reaction is AMP(in) + ADP(out) = AMP(out) + ADP(in). It catalyses the reaction dADP(in) + ADP(out) = dADP(out) + ADP(in). The enzyme catalyses ADP(in) + ATP(out) = ADP(out) + ATP(in). In terms of biological role, mitochondrial carrier mediating the transport of coenzyme A (CoA) in mitochondria in exchange for intramitochondrial (deoxy)adenine nucleotides and adenosine 3',5'-diphosphate. The protein is Mitochondrial coenzyme A transporter SLC25A42 (slc25a42) of Danio rerio (Zebrafish).